We begin with the raw amino-acid sequence, 282 residues long: Deoxyribonuclease-1 (282 aa).

An N-terminal signal peptide occupies residues 1 to 22 (MRGARLTGALLALAGLLQVALS). N-linked (GlcNAc...) asparagine glycosylation is present at Asn-40. Residue Glu-100 is part of the active site. A disulfide bond links Cys-123 and Cys-126. A glycan (N-linked (GlcNAc...) asparagine) is linked at Asn-128. Residue His-156 is part of the active site. Cys-195 and Cys-231 are oxidised to a cystine.

This sequence belongs to the DNase I family. The cofactor is Ca(2+). It depends on Mg(2+) as a cofactor.

It localises to the secreted. The protein localises to the zymogen granule. Its subcellular location is the nucleus envelope. The enzyme catalyses Endonucleolytic cleavage to 5'-phosphodinucleotide and 5'-phosphooligonucleotide end-products.. Functionally, serum endocuclease secreted into body fluids by a wide variety of exocrine and endocrine organs. Expressed by non-hematopoietic tissues and preferentially cleaves protein-free DNA. Among other functions, seems to be involved in cell death by apoptosis. Binds specifically to G-actin and blocks actin polymerization. Together with DNASE1L3, plays a key role in degrading neutrophil extracellular traps (NETs). NETs are mainly composed of DNA fibers and are released by neutrophils to bind pathogens during inflammation. Degradation of intravascular NETs by DNASE1 and DNASE1L3 is required to prevent formation of clots that obstruct blood vessels and cause organ damage following inflammation. The protein is Deoxyribonuclease-1 (DNASE1) of Equus caballus (Horse).